Reading from the N-terminus, the 290-residue chain is Membrane protein insertase YidC 1 (290 aa).

Positions Met1–Gly19 are cleaved as a signal peptide. Cys20 carries the N-palmitoyl cysteine lipid modification. Cys20 carries the S-diacylglycerol cysteine lipid modification. The next 5 membrane-spanning stretches (helical) occupy residues Phe56–Leu76, Met134–Leu154, Pro176–Ser196, Met211–Leu231, and Tyr232–Ser252. The tract at residues His270 to Lys290 is disordered. Residues Asn280–Lys290 are compositionally biased toward polar residues.

This sequence belongs to the OXA1/ALB3/YidC family. Type 2 subfamily.

The protein localises to the cell membrane. Its function is as follows. Required for the insertion and/or proper folding and/or complex formation of integral membrane proteins into the membrane. Involved in integration of membrane proteins that insert both dependently and independently of the Sec translocase complex, as well as at least some lipoproteins. The polypeptide is Membrane protein insertase YidC 1 (Staphylococcus epidermidis (strain ATCC 12228 / FDA PCI 1200)).